A 687-amino-acid chain; its full sequence is MTEITAEGNASITTTVIDNKNGSVPKSPGKVLKRTVTEDIVTTFSSPAAWLLVIALIITWSAVAIVMFDLVDYKNFSASSIAKIGSDPLKLVNDAVEETTDWIYGFFSLLSDIISSDGDEDDEDADEDIDKGEIEEPPLKRKEIQKEKAEKQEKPEKKIQTKVSHREKEKGKEKLKGEKPEKKATHKEKLEKKERTETKMAAKEDKKIKTKEKTEEKAKKEMKVGKQEKAKPAAAKAKETPKTTPKAREKDDKETPAVPKHEQKDQYAFCRYMIDMFVHGDLKPGQSPAVPPPSLTASRPALSTPSLEEKEKEEKKKVEKKVTSDTKKKEKGEAKKKSEKETVIDGKGKEPGKPPETKQTTTKLTTQAAATKDEKKEDSKKMKKPPEEKPKGKKQEKKEKHIEPAKTPKKEHPAPSEKHRKAKAEQAKEEIAPASTKKALHGKKEEKAKTVEQGKDVKPKLPQPQLKKEEKSEPQPKKEVKLETQLKKEEKSEPQVKKEAKLASSEKGQTRKQNITRPEQVIPHGKPEQKVPKQIKAITAEKTEKAERQEKYHPSIKTEGKPEVTDSGKKKIEKPEKESKVPPKQENLQVRNVTRAEKRGKISKDSKDAPAPKKDKDSKDVLHSKKDKEVTNNVSSPKKQKSPISFFQCVYLDGYNGYGFQFPVTPVQHSGENPGKSNSPGQKQQEQ.

Residues 1–47 (MTEITAEGNASITTTVIDNKNGSVPKSPGKVLKRTVTEDIVTTFSSP) are Cytoplasmic-facing. The helical transmembrane segment at 48-68 (AAWLLVIALIITWSAVAIVMF) threads the bilayer. The Lumenal portion of the chain corresponds to 69–687 (DLVDYKNFSA…NSPGQKQQEQ (619 aa)). A compositionally biased stretch (acidic residues) spans 117–130 (DGDEDDEDADEDID). Disordered regions lie at residues 117-265 (DGDE…EQKD), 280-643 (GDLK…QKSP), and 660-687 (FQFP…QQEQ). Over residues 131–265 (KGEIEEPPLK…PAVPKHEQKD (135 aa)) the composition is skewed to basic and acidic residues. Residues 295 to 306 (LTASRPALSTPS) show a composition bias toward polar residues. Residues Ser303 and Ser306 each carry the phosphoserine modification. A compositionally biased stretch (basic and acidic residues) spans 307–356 (LEEKEKEEKKKVEKKVTSDTKKKEKGEAKKKSEKETVIDGKGKEPGKPPE). Positions 357-370 (TKQTTTKLTTQAAA) are enriched in low complexity. Composition is skewed to basic and acidic residues over residues 371 to 390 (TKDE…EEKP), 396 to 431 (EKKE…KEEI), 442 to 459 (GKKE…DVKP), and 466 to 501 (LKKE…KEAK). Residue Asn514 is glycosylated (N-linked (GlcNAc...) asparagine). 2 stretches are compositionally biased toward basic and acidic residues: residues 539-583 (TAEK…KVPP) and 594-630 (TRAE…DKEV). Polar residues-rich tracts occupy residues 631 to 643 (TNNV…QKSP) and 667 to 687 (VQHS…QQEQ).

As to quaternary structure, homooligomer of variable subunit number; disulfide-linked. Interacts with CASQ1 in skeletal muscle. Interacts with CASQ2. Interacts with RYR1 in skeletal muscle. Post-translationally, phosphorylated by CaMK2. In terms of processing, N-glycosylated. As to expression, detected in skeletal muscle (at protein level). Detected in skeletal muscle.

It is found in the sarcoplasmic reticulum membrane. It localises to the microsome. The protein resides in the cell membrane. The protein localises to the sarcolemma. In terms of biological role, contributes to the regulation of lumenal Ca2+ release via the sarcoplasmic reticulum calcium release channels RYR1 and RYR2, a key step in triggering skeletal and heart muscle contraction. Required for normal organization of the triad junction, where T-tubules and the sarcoplasmic reticulum terminal cisternae are in close contact. Required for normal skeletal muscle strength. Plays a role in excitation-contraction coupling in the heart and in regulating the rate of heart beats. The chain is Triadin from Rattus norvegicus (Rat).